The following is a 434-amino-acid chain: 3-phosphoshikimate 1-carboxyvinyltransferase (434 aa).

3 residues coordinate 3-phosphoshikimate: K22, S23, and R27. K22 is a phosphoenolpyruvate binding site. 2 residues coordinate phosphoenolpyruvate: G93 and R121. Residues S168, S169, Q170, S199, D320, and K347 each coordinate 3-phosphoshikimate. Residue Q170 coordinates phosphoenolpyruvate. Residue D320 is the Proton acceptor of the active site. Positions 351, 394, and 419 each coordinate phosphoenolpyruvate.

It belongs to the EPSP synthase family. As to quaternary structure, monomer.

The protein localises to the cytoplasm. It catalyses the reaction 3-phosphoshikimate + phosphoenolpyruvate = 5-O-(1-carboxyvinyl)-3-phosphoshikimate + phosphate. The protein operates within metabolic intermediate biosynthesis; chorismate biosynthesis; chorismate from D-erythrose 4-phosphate and phosphoenolpyruvate: step 6/7. In terms of biological role, catalyzes the transfer of the enolpyruvyl moiety of phosphoenolpyruvate (PEP) to the 5-hydroxyl of shikimate-3-phosphate (S3P) to produce enolpyruvyl shikimate-3-phosphate and inorganic phosphate. The polypeptide is 3-phosphoshikimate 1-carboxyvinyltransferase (Burkholderia orbicola (strain MC0-3)).